The following is a 500-amino-acid chain: Probable malate:quinone oxidoreductase (500 aa).

The protein belongs to the MQO family. FAD is required as a cofactor.

The enzyme catalyses (S)-malate + a quinone = a quinol + oxaloacetate. Its pathway is carbohydrate metabolism; tricarboxylic acid cycle; oxaloacetate from (S)-malate (quinone route): step 1/1. This Bacillus cereus (strain ZK / E33L) protein is Probable malate:quinone oxidoreductase.